The primary structure comprises 153 residues: uncharacterized protein (153 aa).

The protein localises to the mitochondrion. This is an uncharacterized protein from Arabidopsis thaliana (Mouse-ear cress).